The primary structure comprises 986 residues: DNA polymerase (986 aa).

2 disordered regions span residues 804–824 (DNPGKKRKSADDNNEGPSPKR) and 944–969 (RKRDDDDDNNDDDDDDGCDSSDSEND). Residues 948 to 968 (DDDDNNDDDDDDGCDSSDSEN) are compositionally biased toward acidic residues.

It belongs to the DNA polymerase type-B family.

The catalysed reaction is DNA(n) + a 2'-deoxyribonucleoside 5'-triphosphate = DNA(n+1) + diphosphate. Its function is as follows. Replicates the viral genome, host DNA polymerases cannot substitute for the viral enzyme in this process. The sequence is that of DNA polymerase (POL) from Bombyx mori (Silk moth).